The following is a 655-amino-acid chain: NACHT, LRR and PYD domains-containing protein 10 (655 aa).

Positions 1 to 96 (MAMAKARKPR…VDQLSHICLH (96 aa)) constitute a Pyrin domain. One can recognise an NACHT domain in the interval 167-484 (SLVVLQGSAG…AMSYLVKEDQ (318 aa)). 173 to 180 (GSAGTGKT) contributes to the ATP binding site. Positions 597 to 609 (QSQNLFSVKSSLS) are enriched in polar residues. The tract at residues 597–655 (QSQNLFSVKSSLSHGPKEEQKCPSVHGQKEGKDNIAGTQKEASTGKGRGTEETPKNTYI) is disordered. Composition is skewed to basic and acidic residues over residues 611–629 (GPKEEQKCPSVHGQKEGKD) and 644–655 (RGTEETPKNTYI).

It belongs to the NLRP family. As to quaternary structure, oligomerizes. Interacts with PYCARD. Also interacts with CASP1 and IL1B. Interacts with NOD1 and components of the NOD1 signaling pathway including RIPK2, NR2C2/TAK1 and IKBKG/NEMO. Highly expressed in basal and suprabasal epidermal cell layers with lower levels in dermal fibroblast cells (at protein level). Widely expressed with highest levels in heart, brain and skeletal muscle. Also expressed in liver, colon, dermis and epidermis. Little expression detected in myeloid cells or peripheral blood mononuclear cells.

The protein localises to the cytoplasm. The protein resides in the cell membrane. Inhibits autoprocessing of CASP1, CASP1-dependent IL1B secretion, PYCARD aggregation and PYCARD-mediated apoptosis but not apoptosis induced by FAS or BID. Displays anti-inflammatory activity. Required for immunity against C.albicans infection. Involved in the innate immune response by contributing to pro-inflammatory cytokine release in response to invasive bacterial infection. Contributes to T-cell-mediated inflammatory responses in the skin. Plays a role in protection against periodontitis through its involvement in induction of IL1A via ERK activation in oral epithelial cells infected with periodontal pathogens. Exhibits both ATPase and GTPase activities. The protein is NACHT, LRR and PYD domains-containing protein 10 (NLRP10) of Homo sapiens (Human).